Reading from the N-terminus, the 139-residue chain is Transcription antitermination protein NusB (139 aa).

Belongs to the NusB family.

Its function is as follows. Involved in transcription antitermination. Required for transcription of ribosomal RNA (rRNA) genes. Binds specifically to the boxA antiterminator sequence of the ribosomal RNA (rrn) operons. This chain is Transcription antitermination protein NusB, found in Cronobacter sakazakii (strain ATCC BAA-894) (Enterobacter sakazakii).